Reading from the N-terminus, the 307-residue chain is Small ribosomal subunit protein bS1 (307 aa).

S1 motif domains follow at residues 32–101 (GDTV…LSIR), 119–183 (DATV…LSHR), and 197–265 (GEVV…LSTK).

This sequence belongs to the bacterial ribosomal protein bS1 family.

In terms of biological role, binds mRNA. The sequence is that of Small ribosomal subunit protein bS1 (rpsA) from Synechococcus sp. (strain ATCC 27144 / PCC 6301 / SAUG 1402/1) (Anacystis nidulans).